The chain runs to 451 residues: Bifunctional protein GlmU (451 aa).

The segment at 1 to 236 (MDQTPSYSPP…YEELRGINSK (236 aa)) is pyrophosphorylase. Residues 17-20 (LAAG), lysine 31, glutamine 79, 84-85 (GT), 105-107 (YGD), glycine 144, glutamate 162, asparagine 177, and asparagine 234 each bind UDP-N-acetyl-alpha-D-glucosamine. Aspartate 107 serves as a coordination point for Mg(2+). Asparagine 234 serves as a coordination point for Mg(2+). The tract at residues 237-257 (VELAEAEATVQIVLRRKALEN) is linker. The N-acetyltransferase stretch occupies residues 258–451 (GVTMTAPETV…EIRRQLKGSV (194 aa)). Residues arginine 323 and lysine 341 each contribute to the UDP-N-acetyl-alpha-D-glucosamine site. Histidine 353 functions as the Proton acceptor in the catalytic mechanism. Residues tyrosine 356 and asparagine 367 each coordinate UDP-N-acetyl-alpha-D-glucosamine. Acetyl-CoA contacts are provided by residues alanine 370, 376–377 (NY), serine 395, alanine 413, and arginine 430.

This sequence in the N-terminal section; belongs to the N-acetylglucosamine-1-phosphate uridyltransferase family. In the C-terminal section; belongs to the transferase hexapeptide repeat family. Homotrimer. Requires Mg(2+) as cofactor.

The protein resides in the cytoplasm. It carries out the reaction alpha-D-glucosamine 1-phosphate + acetyl-CoA = N-acetyl-alpha-D-glucosamine 1-phosphate + CoA + H(+). The enzyme catalyses N-acetyl-alpha-D-glucosamine 1-phosphate + UTP + H(+) = UDP-N-acetyl-alpha-D-glucosamine + diphosphate. Its pathway is nucleotide-sugar biosynthesis; UDP-N-acetyl-alpha-D-glucosamine biosynthesis; N-acetyl-alpha-D-glucosamine 1-phosphate from alpha-D-glucosamine 6-phosphate (route II): step 2/2. It functions in the pathway nucleotide-sugar biosynthesis; UDP-N-acetyl-alpha-D-glucosamine biosynthesis; UDP-N-acetyl-alpha-D-glucosamine from N-acetyl-alpha-D-glucosamine 1-phosphate: step 1/1. It participates in bacterial outer membrane biogenesis; LPS lipid A biosynthesis. Catalyzes the last two sequential reactions in the de novo biosynthetic pathway for UDP-N-acetylglucosamine (UDP-GlcNAc). The C-terminal domain catalyzes the transfer of acetyl group from acetyl coenzyme A to glucosamine-1-phosphate (GlcN-1-P) to produce N-acetylglucosamine-1-phosphate (GlcNAc-1-P), which is converted into UDP-GlcNAc by the transfer of uridine 5-monophosphate (from uridine 5-triphosphate), a reaction catalyzed by the N-terminal domain. This Granulibacter bethesdensis (strain ATCC BAA-1260 / CGDNIH1) protein is Bifunctional protein GlmU.